The chain runs to 471 residues: Soluble pyridine nucleotide transhydrogenase (471 aa).

41 to 50 (EREPSVGGGC) provides a ligand contact to FAD.

This sequence belongs to the class-I pyridine nucleotide-disulfide oxidoreductase family. FAD serves as cofactor.

Its subcellular location is the cytoplasm. The catalysed reaction is NAD(+) + NADPH = NADH + NADP(+). In terms of biological role, conversion of NADPH, generated by peripheral catabolic pathways, to NADH, which can enter the respiratory chain for energy generation. The polypeptide is Soluble pyridine nucleotide transhydrogenase (Aliivibrio fischeri (strain ATCC 700601 / ES114) (Vibrio fischeri)).